The sequence spans 1169 residues: Pesticidal crystal protein Cry1Fb (1169 aa).

It belongs to the delta endotoxin family.

Its function is as follows. Promotes colloidosmotic lysis by binding to the midgut epithelial cells of insects. The polypeptide is Pesticidal crystal protein Cry1Fb (cry1Fb) (Bacillus thuringiensis subsp. morrisoni).